Reading from the N-terminus, the 100-residue chain is MGFNNLVSLAALIEKVFPIRYTPAGISVLDIILKHESWQKENGQQCFVQLEIPARILGRQAEEWQYRQGVYVHVEGFLAQKSRRSLMPMLRIQNIKEYKG.

Positions 1–99 (MGFNNLVSLA…LRIQNIKEYK (99 aa)) constitute an SSB domain.

Belongs to the PriB family. In terms of assembly, homodimer. Interacts with PriA and DnaT. Component of the replication restart primosome. Primosome assembly occurs via a 'hand-off' mechanism. PriA binds to replication forks, subsequently PriB then DnaT bind; DnaT then displaces ssDNA to generate the helicase loading substrate.

Involved in the restart of stalled replication forks, which reloads the replicative helicase on sites other than the origin of replication; the PriA-PriB pathway is the major replication restart pathway. During primosome assembly it facilitates complex formation between PriA and DnaT on DNA; stabilizes PriA on DNA. Stimulates the DNA unwinding activity of PriA helicase. This Neisseria meningitidis serogroup C (strain 053442) protein is Replication restart protein PriB.